The sequence spans 500 residues: ATP synthase subunit alpha (500 aa).

Residue 169–176 (GDRQTGKT) coordinates ATP.

This sequence belongs to the ATPase alpha/beta chains family. As to quaternary structure, F-type ATPases have 2 components, CF(1) - the catalytic core - and CF(0) - the membrane proton channel. CF(1) has five subunits: alpha(3), beta(3), gamma(1), delta(1), epsilon(1). CF(0) has three main subunits: a(1), b(2) and c(9-12). The alpha and beta chains form an alternating ring which encloses part of the gamma chain. CF(1) is attached to CF(0) by a central stalk formed by the gamma and epsilon chains, while a peripheral stalk is formed by the delta and b chains.

The protein resides in the cell membrane. It carries out the reaction ATP + H2O + 4 H(+)(in) = ADP + phosphate + 5 H(+)(out). Its function is as follows. Produces ATP from ADP in the presence of a proton gradient across the membrane. The alpha chain is a regulatory subunit. In Clostridioides difficile (strain 630) (Peptoclostridium difficile), this protein is ATP synthase subunit alpha.